We begin with the raw amino-acid sequence, 242 residues long: Urease accessory protein UreF (242 aa).

It belongs to the UreF family. In terms of assembly, ureD, UreF and UreG form a complex that acts as a GTP-hydrolysis-dependent molecular chaperone, activating the urease apoprotein by helping to assemble the nickel containing metallocenter of UreC. The UreE protein probably delivers the nickel.

Its subcellular location is the cytoplasm. Required for maturation of urease via the functional incorporation of the urease nickel metallocenter. This is Urease accessory protein UreF from Bradyrhizobium diazoefficiens (strain JCM 10833 / BCRC 13528 / IAM 13628 / NBRC 14792 / USDA 110).